Consider the following 212-residue polypeptide: Pyridoxine/pyridoxamine 5'-phosphate oxidase (212 aa).

Substrate is bound by residues 8 to 11 (RREY) and lysine 66. Residues 61–66 (RIVLLK), 76–77 (FT), arginine 82, lysine 83, and glutamine 105 each bind FMN. Residues tyrosine 123, arginine 127, and serine 131 each contribute to the substrate site. FMN contacts are provided by residues 140-141 (QS) and tryptophan 185. 191-193 (RLH) provides a ligand contact to substrate. Arginine 195 contributes to the FMN binding site.

Belongs to the pyridoxamine 5'-phosphate oxidase family. Homodimer. It depends on FMN as a cofactor.

It catalyses the reaction pyridoxamine 5'-phosphate + O2 + H2O = pyridoxal 5'-phosphate + H2O2 + NH4(+). The enzyme catalyses pyridoxine 5'-phosphate + O2 = pyridoxal 5'-phosphate + H2O2. Its pathway is cofactor metabolism; pyridoxal 5'-phosphate salvage; pyridoxal 5'-phosphate from pyridoxamine 5'-phosphate: step 1/1. It functions in the pathway cofactor metabolism; pyridoxal 5'-phosphate salvage; pyridoxal 5'-phosphate from pyridoxine 5'-phosphate: step 1/1. Its function is as follows. Catalyzes the oxidation of either pyridoxine 5'-phosphate (PNP) or pyridoxamine 5'-phosphate (PMP) into pyridoxal 5'-phosphate (PLP). This is Pyridoxine/pyridoxamine 5'-phosphate oxidase from Shewanella putrefaciens (strain CN-32 / ATCC BAA-453).